The chain runs to 850 residues: MALPSSSLSSQIHTGATTQCIPHFHGSLNAGTSAGKRRSLYLRWGKGPSKIVACAGQDPFSVPTLVKREFPPGFWKDHVIESLMPSYKVAPSDEKRIETLITEIKNMFRSMGYGETNPSAYDTAWVARIPAVDGSEKPQFPETLEWILQNQLKDGSWGEEFYFLAYDRILATLACIITLTIWQTGDTQVQKGIEFFKTQAGKIEEEADSHRPSGFEIVFPAMLKEAKALGLALPYELPFIQQIIEKREAKLQRLPPDLLYALPTTLLYSLEGLQEIVDWEKIMKLQSKDGSFLSSPASTAAVFMRTGNKKCLEFLNFVLKKFGNHVPCHYPLDLFERLWAVDTVERLGIDHHFKEEIKDALDYVYSHWDERGIGWARENPVPDIDDTAMGLRILRLHGYNVSSDVLKTFRDENGEFFCFLGQTQRGVTDMLNVNRCSHVAFPGETIMEEAKLCTERYLRNALEDGGASDKWALKKNIRGEVEYALKYPWHRSMPRLEARSYIENYGPNDVWLGKTMYMMPNISNEKYLELAKLDFNRVQFFHRQELQDIRRWWNSSGFSQLGFTRERVAEIYFSPASFLFEPEFATCRAVYTKTSNFTVILDDLYDAHGTLDNLKLFSESVKRWDLSLVDQMPQDMKICFKGFYNTFNEIAEEGRKRQGRDVLSYIQKVWEVQLEAYTKEAEWSAVRYVPSYDEYIGNASVSIALGTVVLISALFTGEILTDDILSKIGRDSRFLYLMGLTGRLVNDTKTYQAERGQGEVASAVQCYMKDHPEISEEEALKHVYTIMDNALDELNREFVNNRDVPDTCRRLVFETARIMQLFYMDGDGLTLSHNMEIKEHVKNCLFQPVA.

A chloroplast-targeting transit peptide spans 1-52; that stretch reads MALPSSSLSSQIHTGATTQCIPHFHGSLNAGTSAGKRRSLYLRWGKGPSKIV. Lys-250 lines the substrate pocket. The Mg(2+) site is built by Asp-383 and Asp-385. The short motif at 383–386 is the DXDD motif element; it reads DIDD. Lys-470 is a substrate binding site. Positions 602, 606, 746, 750, and 754 each coordinate Mg(2+). Positions 602–606 match the DDXXD motif motif; sequence DDLYD.

It belongs to the terpene synthase family. Tpsd subfamily. It depends on Mg(2+) as a cofactor. In terms of tissue distribution, expressed in young tissues such as flushing buds and green bark tissues. Lower levels in mature needles and bark.

Its subcellular location is the plastid. The protein resides in the chloroplast. It catalyses the reaction (2E,6E,10E)-geranylgeranyl diphosphate = (+)-copalyl diphosphate. The enzyme catalyses (+)-copalyl diphosphate = abieta-8(14),12-diene + diphosphate. The catalysed reaction is (+)-copalyl diphosphate = neoabietadiene + diphosphate. Its pathway is terpene metabolism; oleoresin biosynthesis. Involved in defensive oleoresin formation in conifers in response to insect attack or other injury. Involved in diterpene (C20) olefins biosynthesis. Bifunctional enzyme that catalyzes two sequential cyclizations of geranylgeranyl diphosphate (GGPP) to levopimaradiene. Levopimaradiene is the major products of the enzyme followed by abietadiene, neoabietadiene and palustradiene. No activity with geranyl diphosphate (GPP) or farnesyl diphosphate (FPP) as substrate. The protein is Bifunctional levopimaradiene synthase, chloroplastic (LPS) of Pinus taeda (Loblolly pine).